Consider the following 113-residue polypeptide: Putative membrane protein insertion efficiency factor (113 aa).

The protein belongs to the UPF0161 family.

The protein resides in the cell inner membrane. Its function is as follows. Could be involved in insertion of integral membrane proteins into the membrane. This Campylobacter jejuni subsp. doylei (strain ATCC BAA-1458 / RM4099 / 269.97) protein is Putative membrane protein insertion efficiency factor.